The chain runs to 185 residues: Elongation factor P (185 aa).

The protein belongs to the elongation factor P family.

It is found in the cytoplasm. Its pathway is protein biosynthesis; polypeptide chain elongation. Its function is as follows. Involved in peptide bond synthesis. Stimulates efficient translation and peptide-bond synthesis on native or reconstituted 70S ribosomes in vitro. Probably functions indirectly by altering the affinity of the ribosome for aminoacyl-tRNA, thus increasing their reactivity as acceptors for peptidyl transferase. The polypeptide is Elongation factor P (Bordetella avium (strain 197N)).